Reading from the N-terminus, the 149-residue chain is Calmodulin-2 (149 aa).

Ala2 is modified (N-acetylalanine). EF-hand domains are found at residues 8-43, 44-79, 81-116, and 117-149; these read EQIA…LGQN, PTEA…KMKD, DSEE…LGEK, and LTDE…MLAK. Residues Asp21, Asp23, Asp25, Cys27, Glu32, Asp57, Asp59, Asn61, Thr63, Glu68, Asp94, Asp96, Asn98, Tyr100, and Asp105 each contribute to the Ca(2+) site. Lys116 bears the N6,N6,N6-trimethyllysine mark. Ca(2+) contacts are provided by Asp130, Asp132, Asp134, Gln136, and Glu141.

It belongs to the calmodulin family.

In terms of biological role, calmodulin mediates the control of a large number of enzymes, ion channels and other proteins by Ca(2+). Among the enzymes to be stimulated by the calmodulin-Ca(2+) complex are a number of protein kinases and phosphatases. The protein is Calmodulin-2 (CAM72) of Petunia hybrida (Petunia).